Consider the following 496-residue polypeptide: Iroquois-class homeodomain protein irx-4 (496 aa).

Positions 141 to 203 (GSTRRKNATR…NARRRLKKEN (63 aa)) form a DNA-binding region, homeobox; TALE-type. The interval 203-236 (NKMTWPPRNKCSDEKRPYDEEEEEEEEEDSQKAT) is disordered. The segment covering 221 to 231 (DEEEEEEEEED) has biased composition (acidic residues).

It belongs to the TALE/IRO homeobox family. As to expression, expressed in the neural plate in overlapping patterns with other irx members, which all share an anterior border of expression. Broadly expressed in the tailbud rhombencephalon (hindbrain). Outside the nervous system and at tailbud stages, expressed in the developing otic vesicle, branchial arches and prospective heart region.

The protein resides in the nucleus. In terms of biological role, acts partially redundantly with other irx members in neural patterning. Required for formation of the posterior forebrain, midbrain, hindbrain, and to a lesser extent, spinal cord. Patterns the neuroectoderm in both the anterior/posterior and dorsal/ventral axes. Does not appear to play a role in pronephros kidney development. The polypeptide is Iroquois-class homeodomain protein irx-4 (Xenopus tropicalis (Western clawed frog)).